The sequence spans 122 residues: Large ribosomal subunit protein uL18 (122 aa).

Residues 1–19 show a composition bias toward basic residues; the sequence is MSKLSRKQQTQKRHKRLRR. Residues 1-27 form a disordered region; that stretch reads MSKLSRKQQTQKRHKRLRRNLSGTESR.

Belongs to the universal ribosomal protein uL18 family. As to quaternary structure, part of the 50S ribosomal subunit; part of the 5S rRNA/L5/L18/L25 subcomplex. Contacts the 5S and 23S rRNAs.

In terms of biological role, this is one of the proteins that bind and probably mediate the attachment of the 5S RNA into the large ribosomal subunit, where it forms part of the central protuberance. The polypeptide is Large ribosomal subunit protein uL18 (Prochlorococcus marinus (strain NATL1A)).